The following is a 485-amino-acid chain: Glutamate--tRNA ligase (485 aa).

Positions 11 to 21 match the 'HIGH' region motif; sequence PSPTGLLHIGN. A 'KMSKS' region motif is present at residues 255-259; the sequence is KLSKR. K258 lines the ATP pocket.

Belongs to the class-I aminoacyl-tRNA synthetase family. Glutamate--tRNA ligase type 1 subfamily. In terms of assembly, monomer.

It is found in the cytoplasm. The catalysed reaction is tRNA(Glu) + L-glutamate + ATP = L-glutamyl-tRNA(Glu) + AMP + diphosphate. Functionally, catalyzes the attachment of glutamate to tRNA(Glu) in a two-step reaction: glutamate is first activated by ATP to form Glu-AMP and then transferred to the acceptor end of tRNA(Glu). The chain is Glutamate--tRNA ligase from Streptococcus gordonii (strain Challis / ATCC 35105 / BCRC 15272 / CH1 / DL1 / V288).